The sequence spans 784 residues: 1-phosphatidylinositol 4,5-bisphosphate phosphodiesterase delta-3-A (784 aa).

Residues 1–25 (MLGRKKNPETVQTESKSVESKTHDP) form a disordered region. Residues 16–25 (KSVESKTHDP) show a composition bias toward basic and acidic residues. One can recognise a PH domain in the interval 38-149 (LLMLQGSKMM…WVRGIRTLKD (112 aa)). The substrate binding stretch occupies residues 48-78 (KVRSQRWRKDRRLKLLEDCVTVWCESSKTSR). 3 EF-hand domains span residues 159-194 (KLDHWIRGYLRRADQNQDGKMSYDEVKHLLQLINID), 195-230 (LNEQYARTLFKKCDRSCDGRLDHVEIEEFCREMMRR), and 227-262 (MMRRPELDAVFRHYSGNGCVLTTLELRDFLGDQGED). Ca(2+)-binding residues include D172, N174, D176, K178, E183, D208, S210, D212, R214, and E219. Residues 313 to 458 (QDMSKPLAHY…LKGRILLKGK (146 aa)) form the PI-PLC X-box domain. H328 is a catalytic residue. Ca(2+)-binding residues include N329, E358, and D360. Residue H373 is part of the active site. E407 contacts Ca(2+). Substrate contacts are provided by K456 and K458. A disordered region spans residues 473 to 498 (FTNSSDEESVAGGNKKESKKDLARSA). The span at 486-495 (NKKESKKDLA) shows a compositional bias: basic and acidic residues. The PI-PLC Y-box domain occupies 506-621 (LSDLVVYCQS…GYVLKPEFLC (116 aa)). Residues S534 and R561 each coordinate substrate. Residues 621-750 (CDPKSDFDPE…TGYRHVHLLK (130 aa)) form the C2 domain. 5 residues coordinate Ca(2+): I664, D666, N690, D719, and D721.

The cofactor is Ca(2+).

Its subcellular location is the membrane. It localises to the cytoplasm. It is found in the cleavage furrow. It carries out the reaction a 1,2-diacyl-sn-glycero-3-phospho-(1D-myo-inositol-4,5-bisphosphate) + H2O = 1D-myo-inositol 1,4,5-trisphosphate + a 1,2-diacyl-sn-glycerol + H(+). Functionally, hydrolyzes the phosphatidylinositol 4,5-bisphosphate (PIP2) to generate 2 second messenger molecules diacylglycerol (DAG) and inositol 1,4,5-trisphosphate (IP3). DAG mediates the activation of protein kinase C (PKC), while IP3 releases Ca(2+) from intracellular stores. This Danio rerio (Zebrafish) protein is 1-phosphatidylinositol 4,5-bisphosphate phosphodiesterase delta-3-A (plcd3a).